Here is a 141-residue protein sequence, read N- to C-terminus: Nucleoside diphosphate kinase (141 aa).

6 residues coordinate ATP: Lys11, Phe59, Arg87, Thr93, Arg104, and Asn114. The active-site Pros-phosphohistidine intermediate is His117.

This sequence belongs to the NDK family. In terms of assembly, homotetramer. The cofactor is Mg(2+).

Its subcellular location is the cytoplasm. It catalyses the reaction a 2'-deoxyribonucleoside 5'-diphosphate + ATP = a 2'-deoxyribonucleoside 5'-triphosphate + ADP. The catalysed reaction is a ribonucleoside 5'-diphosphate + ATP = a ribonucleoside 5'-triphosphate + ADP. Major role in the synthesis of nucleoside triphosphates other than ATP. The ATP gamma phosphate is transferred to the NDP beta phosphate via a ping-pong mechanism, using a phosphorylated active-site intermediate. This is Nucleoside diphosphate kinase from Legionella pneumophila subsp. pneumophila (strain Philadelphia 1 / ATCC 33152 / DSM 7513).